A 372-amino-acid polypeptide reads, in one-letter code: DNA replication and repair protein RecF (372 aa).

30 to 37 (GENAQGKT) serves as a coordination point for ATP.

It belongs to the RecF family.

Its subcellular location is the cytoplasm. Its function is as follows. The RecF protein is involved in DNA metabolism; it is required for DNA replication and normal SOS inducibility. RecF binds preferentially to single-stranded, linear DNA. It also seems to bind ATP. This is DNA replication and repair protein RecF from Geobacillus thermodenitrificans (strain NG80-2).